Consider the following 452-residue polypeptide: Keratin, type II cytoskeletal 80 (452 aa).

The tract at residues 1–82 (MAYRSCVVGF…DPAVQQQKNQ (82 aa)) is head. Serine 45 carries the phosphoserine modification. Residues 82-118 (QEKEEMKALNDKFASLIGKVQALEQRNQLLETRWSFL) form a coil 1A region. In terms of domain architecture, IF rod spans 83-394 (EKEEMKALND…KLMEGEESRM (312 aa)). The segment at 119–135 (QGQGSATFDLSHHYETF) is linker 1. The segment at 136 to 227 (QGRLQEELRK…TVYEQELKDL (92 aa)) is coil 1B. Residues 228–251 (TAQVKDVSVTVGLDSRCHIDLSGI) form a linker 12 region. The coil 2 stretch occupies residues 252–390 (VEEVKAQYDA…ATYHKLMEGE (139 aa)). Residues 391-452 (ESRMDLPSAT…YLSQESEASE (62 aa)) are tail. The interval 412–452 (TASKSGLTKTSSRKKKNRRGPVIKITEMSEKYLSQESEASE) is disordered. The span at 422–432 (SSRKKKNRRGP) shows a compositional bias: basic residues. Residues 443–452 (YLSQESEASE) are compositionally biased toward polar residues.

This sequence belongs to the intermediate filament family. Heterotetramer of two type I and two type II keratins.

The chain is Keratin, type II cytoskeletal 80 (Krt80) from Mus musculus (Mouse).